The chain runs to 885 residues: Probable LRR receptor-like serine/threonine-protein kinase At1g51820 (885 aa).

An N-terminal signal peptide occupies residues M1–A20. The Extracellular portion of the chain corresponds to Q21–P509. Residues N22, N93, N135, N194, N228, N250, N254, N281, N287, N424, N437, N456, and N461 are each glycosylated (N-linked (GlcNAc...) asparagine). 3 LRR repeats span residues I403 to N424, H427 to A447, and S451 to K473. Residues V510–L530 traverse the membrane as a helical segment. Residues R531 to R885 are Cytoplasmic-facing. The region spanning N578 to L851 is the Protein kinase domain. Residues L584 to V592 and K606 contribute to the ATP site. Y651 is subject to Phosphotyrosine. The Proton acceptor role is filled by D703. Position 737 is a phosphoserine (S737). Phosphothreonine is present on residues T738 and T743. Y751 is subject to Phosphotyrosine.

It belongs to the protein kinase superfamily. Ser/Thr protein kinase family.

The protein localises to the membrane. It catalyses the reaction L-seryl-[protein] + ATP = O-phospho-L-seryl-[protein] + ADP + H(+). The catalysed reaction is L-threonyl-[protein] + ATP = O-phospho-L-threonyl-[protein] + ADP + H(+). This chain is Probable LRR receptor-like serine/threonine-protein kinase At1g51820, found in Arabidopsis thaliana (Mouse-ear cress).